A 296-amino-acid polypeptide reads, in one-letter code: 33 kDa chaperonin (296 aa).

2 disulfides stabilise this stretch: Cys233/Cys235 and Cys267/Cys270.

Belongs to the HSP33 family. Post-translationally, under oxidizing conditions two disulfide bonds are formed involving the reactive cysteines. Under reducing conditions zinc is bound to the reactive cysteines and the protein is inactive.

The protein resides in the cytoplasm. Redox regulated molecular chaperone. Protects both thermally unfolding and oxidatively damaged proteins from irreversible aggregation. Plays an important role in the bacterial defense system toward oxidative stress. This Actinobacillus pleuropneumoniae serotype 3 (strain JL03) protein is 33 kDa chaperonin.